A 254-amino-acid polypeptide reads, in one-letter code: uncharacterized protein (254 aa).

It belongs to the methyltransferase superfamily.

This is an uncharacterized protein from Mycobacterium bovis (strain ATCC BAA-935 / AF2122/97).